The primary structure comprises 258 residues: MSGLRLEGKIVIITGGASGIGADAARLFTDHGAKVVIVDVQEELGQNVAVLIGKDKASFYRCDVTNETEVEDAVKFTVEKHGKLDVLFSNAGVLEPLESFLDFDLERFDRIMAVNVRGAAAFIKHAARAMVEKGTRGSIVCTTSVSAEIGGGHHGYTASKHGLVGLIRSACGDLGKYGIRVNGVAPYAVATPMTSHDEVTGKQLEDYFDAKGILKGMVLKASHVAQVALFLASDDSAYISGQNLAVDGGYTVVKPSRD.

12 to 36 is a binding site for NAD(+); it reads IITGGASGIGADAARLFTDHGAKVV. Residue S144 participates in substrate binding. Y156 serves as the catalytic Proton acceptor.

The protein belongs to the short-chain dehydrogenases/reductases (SDR) family.

The chain is Short-chain dehydrogenase reductase 3c (SDR3c) from Arabidopsis thaliana (Mouse-ear cress).